We begin with the raw amino-acid sequence, 92 residues long: UPF0213 protein H16_B0156 (92 aa).

Residues 5-80 enclose the GIY-YIG domain; the sequence is SAWYLYLLEC…KRLSSTQKRA (76 aa).

It belongs to the UPF0213 family.

The protein is UPF0213 protein H16_B0156 of Cupriavidus necator (strain ATCC 17699 / DSM 428 / KCTC 22496 / NCIMB 10442 / H16 / Stanier 337) (Ralstonia eutropha).